Here is a 117-residue protein sequence, read N- to C-terminus: Large ribosomal subunit protein bL20 (117 aa).

It belongs to the bacterial ribosomal protein bL20 family.

Functionally, binds directly to 23S ribosomal RNA and is necessary for the in vitro assembly process of the 50S ribosomal subunit. It is not involved in the protein synthesizing functions of that subunit. In Vibrio cholerae serotype O1 (strain ATCC 39541 / Classical Ogawa 395 / O395), this protein is Large ribosomal subunit protein bL20.